We begin with the raw amino-acid sequence, 453 residues long: GTPase Der (453 aa).

2 consecutive EngA-type G domains span residues 3–167 (PIIV…INSK) and 188–361 (VKIA…HTSQ). Residues 9-16 (GRTNVGKS), 57-61 (DTAGI), 119-122 (NKID), 194-201 (GKPNVGKS), 241-245 (DTAGM), and 306-309 (NKCD) each bind GTP. The KH-like domain occupies 362 to 446 (KKIKTSQVMK…PIKIQFKETM (85 aa)).

It belongs to the TRAFAC class TrmE-Era-EngA-EngB-Septin-like GTPase superfamily. EngA (Der) GTPase family. As to quaternary structure, associates with the 50S ribosomal subunit.

In terms of biological role, GTPase that plays an essential role in the late steps of ribosome biogenesis. This Buchnera aphidicola subsp. Schizaphis graminum (strain Sg) protein is GTPase Der.